A 203-amino-acid chain; its full sequence is CASP-like protein 1B1 (203 aa).

Topologically, residues 1-24 (MALVNAEKPEVGSSPSSLGPRNKS) are cytoplasmic. The helical transmembrane segment at 25–45 (WVLLMLRFVAFLATAAATIVM) threads the bilayer. At 46–76 (AANRETKTFVVATIGSTPIKATVTAKFQHTP) the chain is on the extracellular side. A helical membrane pass occupies residues 77–97 (AFVFFVIANGMGSIHNLVMIA). Residues 98-114 (GDTFVRKFDYKGLRWVT) lie on the Cytoplasmic side of the membrane. Residues 115–135 (VAILDMLTAALISGGVNAAVF) traverse the membrane as a helical segment. Residues 136–165 (MAELGKNGNSHAKWNKICDRFGSFCDHGGA) are Extracellular-facing. A helical transmembrane segment spans residues 166–186 (AIIASFIGLLLMLVISIISII). Residues 187–203 (KLLKPKSPLVDSHVLAP) are Cytoplasmic-facing.

Belongs to the Casparian strip membrane proteins (CASP) family. In terms of assembly, homodimer and heterodimers.

It localises to the cell membrane. This is CASP-like protein 1B1 from Ricinus communis (Castor bean).